The following is a 305-amino-acid chain: Oxygen-dependent coproporphyrinogen-III oxidase (305 aa).

Residue Ser97 participates in substrate binding. Residues His101 and His111 each coordinate a divalent metal cation. The Proton donor role is filled by His111. 113 to 115 (NVR) provides a ligand contact to substrate. Residues His150 and His180 each coordinate a divalent metal cation. Residues 245–280 (YVEFNLVWDRGTHFGLQSGGRTESILLSMPPLASWA) form an important for dimerization region. 263-265 (GGR) is a binding site for substrate.

Belongs to the aerobic coproporphyrinogen-III oxidase family. As to quaternary structure, homodimer. Requires a divalent metal cation as cofactor.

Its subcellular location is the cytoplasm. It carries out the reaction coproporphyrinogen III + O2 + 2 H(+) = protoporphyrinogen IX + 2 CO2 + 2 H2O. The protein operates within porphyrin-containing compound metabolism; protoporphyrin-IX biosynthesis; protoporphyrinogen-IX from coproporphyrinogen-III (O2 route): step 1/1. In terms of biological role, involved in the heme biosynthesis. Catalyzes the aerobic oxidative decarboxylation of propionate groups of rings A and B of coproporphyrinogen-III to yield the vinyl groups in protoporphyrinogen-IX. The chain is Oxygen-dependent coproporphyrinogen-III oxidase from Variovorax paradoxus (strain S110).